We begin with the raw amino-acid sequence, 503 residues long: MSNIAPQVLRHASRACSRRLSLSASLVRPAYSARTVTGSGSGGRRYVSGSQRHNAQAQTTVESAVKTEQKASVPGTAVTGDALANPSAGILKQATIMDEGNRPIYLDMQATTPTDPRVLDAMLPFLTGLYGNPHSRTHAYGWETEKATEQARSHVATLIGADPKEIIFTSGATESNNMSIKGVARFFGRSGKKKHIITTQTEHKCVLDSCRHLQDEGFEVTYLPVQSNGLIKIEDLEAAIRPETALVSIMTVNNEIGVIQPMKEIGALCRSKKVFFHTDAAQAVGKIPVDVNEWNVDLMSISGHKLYGPKGIGACYVRRRPRVRIDPLITGGGQERGLRSGTLAPPLVVGFGEACRLAKEEMEYDSKRISALSQRLLTSLLALEHTTLNGDPNRHYPGCVNVSFAYVEGESLLMALKDIALSSGSACTSASLEPSYVLRALGNSDESAHSSIRFGIGRFTTESEIDYVIKAVKERVTFLRELSPLWELVQEGVDLNTIEWSQH.

Residues 1-27 (MSNIAPQVLRHASRACSRRLSLSASLV) constitute a mitochondrion transit peptide. Residues 34–50 (RTVTGSGSGGRRYVSGS) show a composition bias toward low complexity. Positions 34-58 (RTVTGSGSGGRRYVSGSQRHNAQAQ) are disordered. Residues 172-173 (AT), Asn254, Gln282, and 302-304 (SGH) contribute to the pyridoxal 5'-phosphate site. At Lys305 the chain carries N6-(pyridoxal phosphate)lysine. Thr342 serves as a coordination point for pyridoxal 5'-phosphate. Cys427 serves as the catalytic Cysteine persulfide intermediate. Cys427 is a [2Fe-2S] cluster binding site.

Belongs to the class-V pyridoxal-phosphate-dependent aminotransferase family. NifS/IscS subfamily. It depends on pyridoxal 5'-phosphate as a cofactor.

The protein localises to the mitochondrion. It carries out the reaction (sulfur carrier)-H + L-cysteine = (sulfur carrier)-SH + L-alanine. In terms of biological role, catalyzes the removal of elemental sulfur from cysteine to produce alanine. It supplies the inorganic sulfur for iron-sulfur (Fe-S) clusters. Plays a role in both tRNA-processing and mitochondrial metabolism. Involved in the 2-thio-modification of both 5-carboxymethylaminomethyl-2-thiouridine in mitochondrial tRNAs and 5-methoxycarbonylmethyl-2-thiouridine (mcm5s2U) in cytoplasmic tRNAs. The protein is Cysteine desulfurase, mitochondrial of Arthroderma benhamiae (strain ATCC MYA-4681 / CBS 112371) (Trichophyton mentagrophytes).